The sequence spans 287 residues: Energy-coupling factor transporter ATP-binding protein EcfA2 (287 aa).

Positions 3-245 (IKFENVSYVY…SEWLQKHHLA (243 aa)) constitute an ABC transporter domain. 40–47 (GHTGSGKS) provides a ligand contact to ATP.

This sequence belongs to the ABC transporter superfamily. Energy-coupling factor EcfA family. As to quaternary structure, forms a stable energy-coupling factor (ECF) transporter complex composed of 2 membrane-embedded substrate-binding proteins (S component), 2 ATP-binding proteins (A component) and 2 transmembrane proteins (T component).

It is found in the cell membrane. ATP-binding (A) component of a common energy-coupling factor (ECF) ABC-transporter complex. Unlike classic ABC transporters this ECF transporter provides the energy necessary to transport a number of different substrates. The polypeptide is Energy-coupling factor transporter ATP-binding protein EcfA2 (Lactobacillus delbrueckii subsp. bulgaricus (strain ATCC 11842 / DSM 20081 / BCRC 10696 / JCM 1002 / NBRC 13953 / NCIMB 11778 / NCTC 12712 / WDCM 00102 / Lb 14)).